The chain runs to 152 residues: Inner membrane protein YbbJ (152 aa).

Residues 1–21 (MMELMVVHPHIFWLSLGGLLL) traverse the membrane as a helical segment. At 22–31 (AAEMLGGNGY) the chain is on the cytoplasmic side. Residues 32-52 (LLWSGVAAVITGLVVWLVPLG) form a helical membrane-spanning segment. At 53 to 54 (WE) the chain is on the periplasmic side. A helical transmembrane segment spans residues 55–75 (WQGVMFAILTLLAAWLWWKWL). The Cytoplasmic portion of the chain corresponds to 76-152 (SRRVREQKHS…ITLHIRAVSS (77 aa)).

To M.jannaschii MJ0826.

It localises to the cell inner membrane. In Escherichia coli (strain K12), this protein is Inner membrane protein YbbJ (ybbJ).